The following is a 399-amino-acid chain: Tryptophan synthase beta chain (399 aa).

Lysine 92 is subject to N6-(pyridoxal phosphate)lysine.

The protein belongs to the TrpB family. In terms of assembly, tetramer of two alpha and two beta chains. Pyridoxal 5'-phosphate is required as a cofactor.

It carries out the reaction (1S,2R)-1-C-(indol-3-yl)glycerol 3-phosphate + L-serine = D-glyceraldehyde 3-phosphate + L-tryptophan + H2O. The protein operates within amino-acid biosynthesis; L-tryptophan biosynthesis; L-tryptophan from chorismate: step 5/5. Functionally, the beta subunit is responsible for the synthesis of L-tryptophan from indole and L-serine. The sequence is that of Tryptophan synthase beta chain from Bordetella bronchiseptica (strain ATCC BAA-588 / NCTC 13252 / RB50) (Alcaligenes bronchisepticus).